The primary structure comprises 531 residues: MSSALDDRAVAAPPNPPADHHTRGARFLLLLAVFLCAACGLVYELALTALGSYLIGNSVLQTSVVISVMVFAMGVGSLAAKPLRHRPVVAFAVVEGVLALVGGLSVLMLYAAFAWLQLYMPAMIVVSLVVGLLIGAEIPLLMTLLQRIRTQEASSAVADMFAVDYIGALVGGLCFPLFLLPTFGQLKGALVVGVVNAVAGVIVVVFIFRRQTGRLVKAGLLAGVALVLAALGTTYVLADDLEVTARQHMYADPIIHSETTQYQDIVVTRSTAFTGEPDVRLFLNGDLQFSSVDEYRYHESLVHPALSGPHSNVLIMGGGDGLALREVLRHEGVRHVTLVELDPAMTRLARTFEPLRKLNQGSLDDPRAKVVNADAFTWLREARQQYDAVIIDFPDPDSASLAKLYSVEFYDLLRRVLAPDGQVMVQSGSPFFAPKTYWSIAKTIETAGYATTEFQIDVPSFGNWGFVLARPGTEAPPLRLARDTPKLRYLDAAVLKAATVFPVDRRRTDVRPSTLMDPAVLEYVQDEWRDY.

7 helical membrane-spanning segments follow: residues 27–47 (FLLL…ELAL), 59–79 (VLQT…GSLA), 96–116 (GVLA…FAWL), 122–142 (AMIV…PLLM), 160–180 (MFAV…LFLL), 188–208 (GALV…VFIF), and 218–238 (AGLL…YVLA). Residues 205 to 476 (VFIFRRQTGR…VLARPGTEAP (272 aa)) form a spermidine synthase region. Residues 233-471 (TTYVLADDLE…GNWGFVLARP (239 aa)) form the PABS domain. An S-methyl-5'-thioadenosine-binding site is contributed by Gln-263. Spermidine contacts are provided by His-298 and Asp-320. Residues Glu-340 and 374–375 (DA) each bind S-methyl-5'-thioadenosine. Asp-392 functions as the Proton acceptor in the catalytic mechanism.

The protein belongs to the spermidine/spermine synthase family. In terms of assembly, homodimer or homotetramer.

The protein resides in the cell membrane. It carries out the reaction S-adenosyl 3-(methylsulfanyl)propylamine + putrescine = S-methyl-5'-thioadenosine + spermidine + H(+). It participates in amine and polyamine biosynthesis; spermidine biosynthesis; spermidine from putrescine: step 1/1. Functionally, catalyzes the irreversible transfer of a propylamine group from the amino donor S-adenosylmethioninamine (decarboxy-AdoMet) to putrescine (1,4-diaminobutane) to yield spermidine. This chain is Polyamine aminopropyltransferase 1, found in Streptomyces coelicolor (strain ATCC BAA-471 / A3(2) / M145).